The primary structure comprises 233 residues: Pyridoxal phosphate homeostasis protein (233 aa).

At K35 the chain carries N6-(pyridoxal phosphate)lysine.

It belongs to the pyridoxal phosphate-binding protein YggS/PROSC family.

Pyridoxal 5'-phosphate (PLP)-binding protein, which is involved in PLP homeostasis. The chain is Pyridoxal phosphate homeostasis protein from Pasteurella multocida (strain Pm70).